The chain runs to 447 residues: Omega-6 fatty acid desaturase, chloroplastic (447 aa).

The transit peptide at 1–65 (MESAITISNH…TRRKSTLVQA (65 aa)) directs the protein to the chloroplast. An N-acetylvaline modification is found at Val-66. The Histidine box-1 motif lies at 171 to 175 (HDCAH). The Histidine box-2 motif lies at 207–211 (HDQHH). Residues 367–371 (HIPHH) carry the Histidine box-3 motif.

Belongs to the fatty acid desaturase type 1 family.

Its subcellular location is the plastid. It localises to the chloroplast membrane. The catalysed reaction is a (9Z)-octadecenoyl-containing glycerolipid + 2 reduced [2Fe-2S]-[ferredoxin] + O2 + 2 H(+) = a (9Z,12Z)-octadecadienoyl-containing glycerolipid + 2 oxidized [2Fe-2S]-[ferredoxin] + 2 H2O. Its pathway is lipid metabolism; polyunsaturated fatty acid biosynthesis. In terms of biological role, chloroplast omega-6 fatty acid desaturase introduces the second double bond in the biosynthesis of 16:3 and 18:3 fatty acids, important constituents of plant membranes. It is thought to use ferredoxin as an electron donor and to act on fatty acids esterified to galactolipids, sulfolipids and phosphatidylglycerol. The sequence is that of Omega-6 fatty acid desaturase, chloroplastic from Spinacia oleracea (Spinach).